Here is a 205-residue protein sequence, read N- to C-terminus: Protease (205 aa).

Catalysis depends on residues His54, Asp71, and Cys120.

The protein belongs to the peptidase C5 family. In terms of assembly, interacts with protease cofactor pVI-C; this interaction is necessary for protease activation.

It localises to the virion. It is found in the host nucleus. The catalysed reaction is Cleaves proteins of the adenovirus and its host cell at two consensus sites: -Yaa-Xaa-Gly-Gly-|-Xaa- and -Yaa-Xaa-Gly-Xaa-|-Gly- (in which Yaa is Met, Ile or Leu, and Xaa is any amino acid).. Requires DNA and protease cofactor for maximal activation. Inside nascent virions, becomes partially activated by binding to the viral DNA, allowing it to cleave the cofactor that binds to the protease and fully activates it. Actin, like the viral protease cofactor, seems to act as a cofactor in the cleavage of cytokeratin 18 and of actin itself. In terms of biological role, cleaves viral precursor proteins (pTP, pIIIa, pVI, pVII, pVIII, and pX) inside newly assembled particles giving rise to mature virions. Protease complexed to its cofactor slides along the viral DNA to specifically locate and cleave the viral precursors. Mature virions have a weakened organization compared to the unmature virions, thereby facilitating subsequent uncoating. Without maturation, the particle lacks infectivity and is unable to uncoat. Late in adenovirus infection, in the cytoplasm, may participate in the cytoskeleton destruction. Cleaves host cell cytoskeletal keratins K7 and K18. This Bos taurus (Bovine) protein is Protease.